We begin with the raw amino-acid sequence, 43 residues long: Lanthionine-containing peptide SapB (43 aa).

A signal peptide spans 1 to 21; it reads MALLDLQAMDTPAEDSFGELR. Cross-links (lanthionine (Ser-Cys)) lie at residues 24–31 and 34–41; these read SQVSLLVC and SSLSVVLC. 2 positions are modified to 2,3-didehydroalanine (Ser): S27 and S37.

The protein belongs to the lanthionine-containing morphogen protein family. In terms of processing, maturation involves the enzymatic conversion of Ser into dehydrated AA and the formation of thioether bonds with cysteine. This is followed by membrane translocation and cleavage of the modified precursor.

In terms of biological role, lanthionine-containing peptide devoid of antibiotic properties, involved in the formation of aerial mycelium. Suggested to self-assemble at air-water interfaces, thus providing a film of surfactant through which nascent aerial hyphae can emerge. The aerial hyphae differentiate further into spores. This is Lanthionine-containing peptide SapB (ramS) from Streptomyces griseus.